The chain runs to 432 residues: Negative regulator of systemic acquired resistance SNI1 (432 aa).

In terms of assembly, interacts with SSN2. Binds to NTL9/CBNAC to promote its binding to promoters of target genes. Component of the SMC5-SMC6 complex which consists at least of SMC5 and SMC6B. Interacts with RAD17. In terms of tissue distribution, expressed at low levels in the veins.

It is found in the nucleus. Its function is as follows. Component of the SMC5-SMC6 complex, a complex involved in repair of DNA double-strand breaks by homologous recombination. Transcription repressor that prevents expression of pathogenesis-related genes (PR) via histone modifications and binding negative cis-acting elements at their promoters. Negative regulator of hypersensitive response (HR) and systemic acquired resistance (SAR) required to dampen the basal expression of pathogenesis related (PR) genes. Functions synergistically with NTL9/CBNAC as negative regulator of pathogen-induced PR1 expression and basal resistance to a virulent strain of P.syringae. Binds to the PR1 gene promoter to suppress defense response in the absence of pathogen challenge and is removed in response to induction. Negatively regulates both gene expression and DNA recombination during pathogen infection, thus being involved in short-term defense response and a long-term survival strategy. Prevents effective immune responses that involve activation of DNA damage responses, probably by negatively regulating the DNA damage sensors RAD17 and ATR. Negative regulator of defenses against the beet cyst nematode H.schachtii. In Arabidopsis thaliana (Mouse-ear cress), this protein is Negative regulator of systemic acquired resistance SNI1.